A 62-amino-acid polypeptide reads, in one-letter code: Small ribosomal subunit protein eS17 (62 aa).

It belongs to the eukaryotic ribosomal protein eS17 family.

This chain is Small ribosomal subunit protein eS17, found in Methanoculleus marisnigri (strain ATCC 35101 / DSM 1498 / JR1).